We begin with the raw amino-acid sequence, 149 residues long: Large ribosomal subunit protein uL15 (149 aa).

Basic residues-rich tracts occupy residues 1 to 14 (MPSR…HRGH) and 21 to 30 (RIGKHRKHPG). The tract at residues 1-39 (MPSRFTKTRKHRGHVSAGKGRIGKHRKHPGGRGMAGGQH) is disordered. Short sequence motifs (nuclear localization signal) lie at residues 7-13 (KTRKHRG) and 24-30 (KHRKHPG). Residue lysine 96 forms a Glycyl lysine isopeptide (Lys-Gly) (interchain with G-Cter in ubiquitin) linkage.

The protein belongs to the universal ribosomal protein uL15 family. In terms of assembly, component of the large ribosomal subunit (LSU). Mature yeast ribosomes consist of a small (40S) and a large (60S) subunit. The 40S small subunit contains 1 molecule of ribosomal RNA (18S rRNA) and 33 different proteins (encoded by 57 genes). The large 60S subunit contains 3 rRNA molecules (25S, 5.8S and 5S rRNA) and 46 different proteins (encoded by 81 genes).

It localises to the cytoplasm. In terms of biological role, component of the ribosome, a large ribonucleoprotein complex responsible for the synthesis of proteins in the cell. The small ribosomal subunit (SSU) binds messenger RNAs (mRNAs) and translates the encoded message by selecting cognate aminoacyl-transfer RNA (tRNA) molecules. The large subunit (LSU) contains the ribosomal catalytic site termed the peptidyl transferase center (PTC), which catalyzes the formation of peptide bonds, thereby polymerizing the amino acids delivered by tRNAs into a polypeptide chain. The nascent polypeptides leave the ribosome through a tunnel in the LSU and interact with protein factors that function in enzymatic processing, targeting, and the membrane insertion of nascent chains at the exit of the ribosomal tunnel. The sequence is that of Large ribosomal subunit protein uL15 from Saccharomyces cerevisiae (strain ATCC 204508 / S288c) (Baker's yeast).